The following is a 108-amino-acid chain: Putative lipid-binding protein AIR1B (108 aa).

The first 23 residues, 1–23 (MAPRTSLALFVSLNLLFFTCTSA), serve as a signal peptide directing secretion. Cystine bridges form between C28-C55, C35-C54, and C71-C107.

The protein belongs to the plant LTP family. PEARLI1 subfamily.

The protein localises to the secreted. This chain is Putative lipid-binding protein AIR1B (AIR1B), found in Arabidopsis thaliana (Mouse-ear cress).